The sequence spans 68 residues: Urocalcin (68 aa).

A signal peptide spans 1-27 (MKASTLVVIFIVIFITISSFSIHDVQA). Residues 28 to 35 (SGVEKREQ) constitute a propeptide that is removed on maturation. Intrachain disulfides connect C38–C52, C45–C56, and C51–C67. The interval 57–59 (KRR) is essential for stimulation of [3H]ryanodine binding to RYR1.

Belongs to the scorpion calcin family. Expressed by the venom gland.

Its subcellular location is the secreted. Functionally, this toxin only weakly stabilizes ryanodine receptor 1 (RyR1) opening in a long-lasting subconductance state (55% of the full conductance state obtained only at high concentrations (1 uM)). In addition, it has been shown to dose-dependently stimulate ryanodine binding to RyR1 with the lowest activity of all calcins (EC(50)=376 nM). It also augments the bell-shaped calcium-[3H]ryanodine binding curve that is maximal at about 10 uM calcium concentration. It binds a different site as ryanodine. It acts synergistically with caffeine. In contrast to other calcins, it does not trigger calcium release from sarcoplasmic vesicles even at high concentration (1 uM). In vivo, intracerebroventricular injection into mice induces neurotoxic symptoms, followed by death. This Urodacus yaschenkoi (Inland robust scorpion) protein is Urocalcin.